The primary structure comprises 203 residues: MTKYTFKPKNFKAFTVDGLDARMEALNERVRPQLNHLGDYFAQYLETATGEIFYPHVAKHARRSVNPPKDTWVAFATNNRGYKMQPHFQIGLFENQLFVMYGVMHEAKDKAQQVQAFVDQFDALRNLPSDYSVSLDHMSQEKTYIHNMTDEDLFKAFRRVKEVKKGEFFVARTLSPNSEHLKNDKAFLSFLEETFEQLLKFYK.

The protein belongs to the UPF0637 family.

In Staphylococcus saprophyticus subsp. saprophyticus (strain ATCC 15305 / DSM 20229 / NCIMB 8711 / NCTC 7292 / S-41), this protein is UPF0637 protein SSP1683.